Consider the following 311-residue polypeptide: tRNA-cytidine(32) 2-sulfurtransferase (311 aa).

The PP-loop motif signature appears at Ser47–Ser52. Positions 122, 125, and 213 each coordinate [4Fe-4S] cluster.

The protein belongs to the TtcA family. In terms of assembly, homodimer. Requires Mg(2+) as cofactor. [4Fe-4S] cluster serves as cofactor.

The protein localises to the cytoplasm. It catalyses the reaction cytidine(32) in tRNA + S-sulfanyl-L-cysteinyl-[cysteine desulfurase] + AH2 + ATP = 2-thiocytidine(32) in tRNA + L-cysteinyl-[cysteine desulfurase] + A + AMP + diphosphate + H(+). Its pathway is tRNA modification. Its function is as follows. Catalyzes the ATP-dependent 2-thiolation of cytidine in position 32 of tRNA, to form 2-thiocytidine (s(2)C32). The sulfur atoms are provided by the cysteine/cysteine desulfurase (IscS) system. In Salmonella arizonae (strain ATCC BAA-731 / CDC346-86 / RSK2980), this protein is tRNA-cytidine(32) 2-sulfurtransferase.